A 237-amino-acid polypeptide reads, in one-letter code: Phosphoribosylaminoimidazole-succinocarboxamide synthase (237 aa).

It belongs to the SAICAR synthetase family.

The catalysed reaction is 5-amino-1-(5-phospho-D-ribosyl)imidazole-4-carboxylate + L-aspartate + ATP = (2S)-2-[5-amino-1-(5-phospho-beta-D-ribosyl)imidazole-4-carboxamido]succinate + ADP + phosphate + 2 H(+). Its pathway is purine metabolism; IMP biosynthesis via de novo pathway; 5-amino-1-(5-phospho-D-ribosyl)imidazole-4-carboxamide from 5-amino-1-(5-phospho-D-ribosyl)imidazole-4-carboxylate: step 1/2. The protein is Phosphoribosylaminoimidazole-succinocarboxamide synthase of Citrobacter koseri (strain ATCC BAA-895 / CDC 4225-83 / SGSC4696).